We begin with the raw amino-acid sequence, 279 residues long: MLIINDNNLSGPLQRVNGTGELSVQFKDGRSRISRLYQEGAAKIRMPQAVTGPLEAILINTSGGLTGGDRLKWDVALDDGASAVITTQACERIYRSGGGEARIATRLKAAKGTRLAWLPQETILFNRSILSRRLDVELEEGAQMLVVEATVFGRLAMGERVVAARFADRWRVRLGGRVIHAEEFRLGPDVGAELQAPAVAGGACAMATVLMVCEQAGRHLETARAIIGEEGGCSLWRVGKASKLVVRLYAPDSYALRRRLCPLVALLNGKAGLPKVWTI.

The protein belongs to the UreD family. UreD, UreF and UreG form a complex that acts as a GTP-hydrolysis-dependent molecular chaperone, activating the urease apoprotein by helping to assemble the nickel containing metallocenter of UreC. The UreE protein probably delivers the nickel.

It is found in the cytoplasm. Functionally, required for maturation of urease via the functional incorporation of the urease nickel metallocenter. The protein is Urease accessory protein UreD of Brucella suis (strain ATCC 23445 / NCTC 10510).